Reading from the N-terminus, the 274-residue chain is Cytochrome b-c1 complex subunit Rieske, mitochondrial (274 aa).

The Mitochondrial matrix segment spans residues Ser-79–Ser-103. Residues Lys-104–Met-140 traverse the membrane as a helical segment. At Ser-141 to Gly-274 the chain is on the mitochondrial intermembrane side. The 86-residue stretch at Glu-187–Val-272 folds into the Rieske domain. [2Fe-2S] cluster contacts are provided by Cys-217, His-219, Cys-236, His-239, and Ser-241. An intrachain disulfide couples Cys-222 to Cys-238.

This sequence belongs to the Rieske iron-sulfur protein family. As to quaternary structure, component of the ubiquinol-cytochrome c oxidoreductase (cytochrome b-c1 complex, complex III, CIII), a multisubunit enzyme composed of 11 subunits. The complex is composed of 3 respiratory subunits cytochrome b, cytochrome c1 and Rieske protein UQCRFS1, 2 core protein subunits UQCRC1/QCR1 and UQCRC2/QCR2, and 6 low-molecular weight protein subunits UQCRH/QCR6, UQCRB/QCR7, UQCRQ/QCR8, UQCR10/QCR9, UQCR11/QCR10 and subunit 9, the cleavage product of Rieske protein UQCRFS1. The complex exists as an obligatory dimer and forms supercomplexes (SCs) in the inner mitochondrial membrane with NADH-ubiquinone oxidoreductase (complex I, CI) and cytochrome c oxidase (complex IV, CIV), resulting in different assemblies (supercomplex SCI(1)III(2)IV(1) and megacomplex MCI(2)III(2)IV(2)). Incorporation of the Rieske protein UQCRFS1 is the penultimate step in complex III assembly. Interacts with TTC19, which is involved in the clearance of UQCRFS1 fragments. In terms of assembly, component of the ubiquinol-cytochrome c oxidoreductase (cytochrome b-c1 complex, complex III, CIII). Subunit 9 corresponds to the mitochondrial targeting sequence (MTS) of Rieske protein UQCRFS1. It is retained after processing and incorporated inside complex III, where it remains bound to the complex and localizes between the 2 core subunits UQCRC1/QCR1 and UQCRC2/QCR2. [2Fe-2S] cluster is required as a cofactor. Proteolytic processing is necessary for the correct insertion of UQCRFS1 in the complex III dimer. Several fragments are generated during UQCRFS1 insertion, most probably due to the endogenous matrix-processing peptidase (MPP) activity of the 2 core protein subunits UQCRC1/QCR1 and UQCRC2/QCR2, which are homologous to the 2 mitochondrial-processing peptidase (MPP) subunits beta-MPP and alpha-MPP respectively. The action of the protease is also necessary for the clearance of the UQCRFS1 fragments.

It is found in the mitochondrion inner membrane. The catalysed reaction is a quinol + 2 Fe(III)-[cytochrome c](out) = a quinone + 2 Fe(II)-[cytochrome c](out) + 2 H(+)(out). Its function is as follows. Component of the ubiquinol-cytochrome c oxidoreductase, a multisubunit transmembrane complex that is part of the mitochondrial electron transport chain which drives oxidative phosphorylation. The respiratory chain contains 3 multisubunit complexes succinate dehydrogenase (complex II, CII), ubiquinol-cytochrome c oxidoreductase (cytochrome b-c1 complex, complex III, CIII) and cytochrome c oxidase (complex IV, CIV), that cooperate to transfer electrons derived from NADH and succinate to molecular oxygen, creating an electrochemical gradient over the inner membrane that drives transmembrane transport and the ATP synthase. The cytochrome b-c1 complex catalyzes electron transfer from ubiquinol to cytochrome c, linking this redox reaction to translocation of protons across the mitochondrial inner membrane, with protons being carried across the membrane as hydrogens on the quinol. In the process called Q cycle, 2 protons are consumed from the matrix, 4 protons are released into the intermembrane space and 2 electrons are passed to cytochrome c. The Rieske protein is a catalytic core subunit containing a [2Fe-2S] iron-sulfur cluster. It cycles between 2 conformational states during catalysis to transfer electrons from the quinol bound in the Q(0) site in cytochrome b to cytochrome c1. Incorporation of UQCRFS1 is the penultimate step in complex III assembly. In terms of biological role, component of the ubiquinol-cytochrome c oxidoreductase (cytochrome b-c1 complex, complex III, CIII). UQCRFS1 undergoes proteolytic processing once it is incorporated in the complex III dimer. One of the fragments, called subunit 9, corresponds to its mitochondrial targeting sequence (MTS). The proteolytic processing is necessary for the correct insertion of UQCRFS1 in the complex III dimer, but the persistence of UQCRFS1-derived fragments may prevent newly imported UQCRFS1 to be processed and assembled into complex III and is detrimental for the complex III structure and function. The protein is Cytochrome b-c1 complex subunit Rieske, mitochondrial (Uqcrfs1) of Rattus norvegicus (Rat).